The following is a 194-amino-acid chain: Imidazoleglycerol-phosphate dehydratase (194 aa).

Belongs to the imidazoleglycerol-phosphate dehydratase family.

It localises to the cytoplasm. The catalysed reaction is D-erythro-1-(imidazol-4-yl)glycerol 3-phosphate = 3-(imidazol-4-yl)-2-oxopropyl phosphate + H2O. Its pathway is amino-acid biosynthesis; L-histidine biosynthesis; L-histidine from 5-phospho-alpha-D-ribose 1-diphosphate: step 6/9. The polypeptide is Imidazoleglycerol-phosphate dehydratase (Thermus thermophilus (strain ATCC BAA-163 / DSM 7039 / HB27)).